Here is a 197-residue protein sequence, read N- to C-terminus: MSTNFIYPNAHLIAGVDEVGRGPLVGAVVTAAVILDPNNPIEGLADSKKLSEKKRLLLAEEIKAKALCWSLGRAEPEEIDRLNILHATMLAMQRAVAGLNIQPDFVLVDGNRIPTLPMPAQAVIKGDSLVAEISAASILAKVARDQEMAELDVQYPEYGFAKHKGYPTKLHFEKLEQFGATPFHRKSFAPVKKILGL.

The RNase H type-2 domain occupies 11-197; it reads HLIAGVDEVG…FAPVKKILGL (187 aa). 3 residues coordinate a divalent metal cation: D17, E18, and D109.

The protein belongs to the RNase HII family. Mn(2+) is required as a cofactor. Mg(2+) serves as cofactor.

It is found in the cytoplasm. It catalyses the reaction Endonucleolytic cleavage to 5'-phosphomonoester.. Endonuclease that specifically degrades the RNA of RNA-DNA hybrids. The protein is Ribonuclease HII of Actinobacillus pleuropneumoniae serotype 7 (strain AP76).